A 362-amino-acid chain; its full sequence is Probable dual-specificity RNA methyltransferase RlmN (362 aa).

E105 serves as the catalytic Proton acceptor. A Radical SAM core domain is found at 111 to 344; it reads HEYGNSICVT…VTIRREQGHD (234 aa). The cysteines at positions 118 and 349 are disulfide-linked. Residues C125, C129, and C132 each coordinate [4Fe-4S] cluster. S-adenosyl-L-methionine contacts are provided by residues 175 to 176, S207, 230 to 232, and N306; these read GE and SLH. The active-site S-methylcysteine intermediate is the C349.

It belongs to the radical SAM superfamily. RlmN family. It depends on [4Fe-4S] cluster as a cofactor.

It localises to the cytoplasm. It carries out the reaction adenosine(2503) in 23S rRNA + 2 reduced [2Fe-2S]-[ferredoxin] + 2 S-adenosyl-L-methionine = 2-methyladenosine(2503) in 23S rRNA + 5'-deoxyadenosine + L-methionine + 2 oxidized [2Fe-2S]-[ferredoxin] + S-adenosyl-L-homocysteine. The enzyme catalyses adenosine(37) in tRNA + 2 reduced [2Fe-2S]-[ferredoxin] + 2 S-adenosyl-L-methionine = 2-methyladenosine(37) in tRNA + 5'-deoxyadenosine + L-methionine + 2 oxidized [2Fe-2S]-[ferredoxin] + S-adenosyl-L-homocysteine. Functionally, specifically methylates position 2 of adenine 2503 in 23S rRNA and position 2 of adenine 37 in tRNAs. The sequence is that of Probable dual-specificity RNA methyltransferase RlmN from Bacillus thuringiensis subsp. konkukian (strain 97-27).